The primary structure comprises 544 residues: MNPKQLIFHDDARDKIRRGVDTLAQAVKVTLGPRGRTVILERDFGSPQIVNSGVLVAKSIELEDRFENMGAQLLREVAARTSEMAGDGTTTATVLAHSMILEGLRYLAGGMNPMDLKRGIEIAIDAVVAELKQLSRPCASSQEIAHVAAISANNDRSIGDLLASAIDKVGREGAISIEDGSGLVSVLDVVEGLQFDRGFLSPYFINNAERQSAVLEDVAILLCEGRLSSLKDLLPLLEEIVKEGRPLLVIAEEVDNDSLAALVINTIRGTLKTCAVKAPGFGDRRKAMVQDIAVLTGGSVVSDEVGLTLGKVKLSDLGRATRAEITKETTTLIGGAGQPKAIKERIATIRKERELASSDYDRDKLDERAAKLAGGVALIKVGAATETELKERKIRVEDALHATRAAVEEGIVPGGGVALLRARRALLTLTGSTLDETSGIRLVARSLEEPLRCIVSNAGDEPSVILNRVDESPDPAFGYNAATRTYGDLLQMGVIDPAKVTRLALQNAASIASLILGTACLIATAPKPLPEEGAHGPGGETPMF.

ATP contacts are provided by residues 30-33, 87-91, Gly-415, 480-482, and Asp-496; these read TLGP, DGTTT, and NAA.

This sequence belongs to the chaperonin (HSP60) family. In terms of assembly, forms a cylinder of 14 subunits composed of two heptameric rings stacked back-to-back. Interacts with the co-chaperonin GroES.

Its subcellular location is the cytoplasm. The enzyme catalyses ATP + H2O + a folded polypeptide = ADP + phosphate + an unfolded polypeptide.. Functionally, together with its co-chaperonin GroES, plays an essential role in assisting protein folding. The GroEL-GroES system forms a nano-cage that allows encapsulation of the non-native substrate proteins and provides a physical environment optimized to promote and accelerate protein folding. The sequence is that of Chaperonin GroEL 2 from Albidiferax ferrireducens (strain ATCC BAA-621 / DSM 15236 / T118) (Rhodoferax ferrireducens).